The chain runs to 385 residues: 1-deoxy-D-xylulose 5-phosphate reductoisomerase (385 aa).

T11, G12, S13, I14, A37, R38, N39, and N123 together coordinate NADPH. K124 contributes to the 1-deoxy-D-xylulose 5-phosphate binding site. E125 is a binding site for NADPH. Position 149 (D149) interacts with Mn(2+). Positions 150, 151, 173, and 196 each coordinate 1-deoxy-D-xylulose 5-phosphate. E151 serves as a coordination point for Mn(2+). NADPH is bound at residue G202. 1-deoxy-D-xylulose 5-phosphate is bound by residues S209, N214, K215, and E218. E218 is a Mn(2+) binding site.

The protein belongs to the DXR family. Mg(2+) is required as a cofactor. Requires Mn(2+) as cofactor.

It carries out the reaction 2-C-methyl-D-erythritol 4-phosphate + NADP(+) = 1-deoxy-D-xylulose 5-phosphate + NADPH + H(+). The protein operates within isoprenoid biosynthesis; isopentenyl diphosphate biosynthesis via DXP pathway; isopentenyl diphosphate from 1-deoxy-D-xylulose 5-phosphate: step 1/6. Its function is as follows. Catalyzes the NADPH-dependent rearrangement and reduction of 1-deoxy-D-xylulose-5-phosphate (DXP) to 2-C-methyl-D-erythritol 4-phosphate (MEP). This chain is 1-deoxy-D-xylulose 5-phosphate reductoisomerase, found in Moorella thermoacetica (strain ATCC 39073 / JCM 9320).